The sequence spans 297 residues: MLTFQAFIQSPGETFLNLGFITIRWYGLLISVSVLIGLFISKKLAKARNINPEYISEILPSLIIFSIIGARAYYVIFEWRQYSGENFFTSLELFNNAIKIPSFLAVWEGGIAIHGGLIGGLISIIFFCKSKKIHLKTFIDILIPSIILGQSIGRWGNFFNNEAFGIPTNLPWKLFIPIQNRPLEFINYEFFHPTFLYESLWNLLVFIFLILIFNKQNKTDFFRPGFISCLYLICYSFGRFWIEGLRTDPLCIGGLPPFCDGGIRMAQFISIFLFSSGLIGIFFLRLRTYIGKNRKNG.

4 consecutive transmembrane segments (helical) span residues 20–40, 57–77, 107–127, and 133–153; these read FITIRWYGLLISVSVLIGLFI, EILPSLIIFSIIGARAYYVIF, WEGGIAIHGGLIGGLISIIFF, and IHLKTFIDILIPSIILGQSIG. R154 contributes to the a 1,2-diacyl-sn-glycero-3-phospho-(1'-sn-glycerol) binding site. 3 helical membrane passes run 193 to 213, 225 to 245, and 266 to 286; these read PTFLYESLWNLLVFIFLILIF, GFISCLYLICYSFGRFWIEGL, and AQFISIFLFSSGLIGIFFLRL.

This sequence belongs to the Lgt family.

The protein localises to the cell inner membrane. The enzyme catalyses L-cysteinyl-[prolipoprotein] + a 1,2-diacyl-sn-glycero-3-phospho-(1'-sn-glycerol) = an S-1,2-diacyl-sn-glyceryl-L-cysteinyl-[prolipoprotein] + sn-glycerol 1-phosphate + H(+). Its pathway is protein modification; lipoprotein biosynthesis (diacylglyceryl transfer). Functionally, catalyzes the transfer of the diacylglyceryl group from phosphatidylglycerol to the sulfhydryl group of the N-terminal cysteine of a prolipoprotein, the first step in the formation of mature lipoproteins. The polypeptide is Phosphatidylglycerol--prolipoprotein diacylglyceryl transferase (Prochlorococcus marinus (strain MIT 9301)).